A 354-amino-acid chain; its full sequence is Small ribosomal subunit biogenesis GTPase RsgA 1 (354 aa).

Over residues 1-24 (MAKKKKLTKGQVRRVRSNQQKRLK) the composition is skewed to basic residues. Residues 1–28 (MAKKKKLTKGQVRRVRSNQQKRLKKQEE) form a disordered region. A CP-type G domain is found at 113-274 (YDGLKPVAAN…LIDSPGVREF (162 aa)). Residues 160–163 (NKVD) and 214–222 (GQSGVGKSS) contribute to the GTP site. Zn(2+)-binding residues include Cys298, Cys303, His305, and Cys311.

The protein belongs to the TRAFAC class YlqF/YawG GTPase family. RsgA subfamily. As to quaternary structure, monomer. Associates with 30S ribosomal subunit, binds 16S rRNA. Zn(2+) is required as a cofactor.

It localises to the cytoplasm. One of several proteins that assist in the late maturation steps of the functional core of the 30S ribosomal subunit. Helps release RbfA from mature subunits. May play a role in the assembly of ribosomal proteins into the subunit. Circularly permuted GTPase that catalyzes slow GTP hydrolysis, GTPase activity is stimulated by the 30S ribosomal subunit. The protein is Small ribosomal subunit biogenesis GTPase RsgA 1 of Vibrio parahaemolyticus serotype O3:K6 (strain RIMD 2210633).